Reading from the N-terminus, the 282-residue chain is Probable endonuclease 4 (282 aa).

His71, His111, Glu147, Asp181, His184, His218, Asp231, His233, and Glu263 together coordinate Zn(2+).

Belongs to the AP endonuclease 2 family. Zn(2+) is required as a cofactor.

It catalyses the reaction Endonucleolytic cleavage to 5'-phosphooligonucleotide end-products.. Its function is as follows. Endonuclease IV plays a role in DNA repair. It cleaves phosphodiester bonds at apurinic or apyrimidinic (AP) sites, generating a 3'-hydroxyl group and a 5'-terminal sugar phosphate. The polypeptide is Probable endonuclease 4 (Protochlamydia amoebophila (strain UWE25)).